The primary structure comprises 227 residues: Large ribosomal subunit protein uL3 (227 aa).

At glutamine 151 the chain carries N5-methylglutamine.

This sequence belongs to the universal ribosomal protein uL3 family. As to quaternary structure, part of the 50S ribosomal subunit. Forms a cluster with proteins L14 and L19. Methylated by PrmB.

Its function is as follows. One of the primary rRNA binding proteins, it binds directly near the 3'-end of the 23S rRNA, where it nucleates assembly of the 50S subunit. The sequence is that of Large ribosomal subunit protein uL3 from Gluconacetobacter diazotrophicus (strain ATCC 49037 / DSM 5601 / CCUG 37298 / CIP 103539 / LMG 7603 / PAl5).